A 29-amino-acid polypeptide reads, in one-letter code: uncharacterized protein (29 aa).

Residues 1–29 (MFKMKFGDTLPRSDFGTGGNKQAPGLELG) form a disordered region.

This is an uncharacterized protein from Saccharomyces cerevisiae (strain ATCC 204508 / S288c) (Baker's yeast).